We begin with the raw amino-acid sequence, 142 residues long: Hemoglobin subunit zeta (142 aa).

Ser2 carries the post-translational modification N-acetylserine. A Globin domain is found at 2 to 142 (SLTKTERTII…VSSVLTEKYR (141 aa)). Thr29 is subject to Phosphothreonine. A Phosphoserine modification is found at Ser53. His59 contributes to the heme b binding site. Phosphoserine occurs at positions 73 and 82. His88 contacts heme b.

It belongs to the globin family. Heterotetramer of two zeta chains and two epsilon chains in early embryonic hemoglobin Gower-1; two zeta chains and two gamma chains in fetal hemoglobin Portland-1. Heterotetramer of two zeta chains and two beta chains in hemoglobin Portland-2, detected in fetuses and neonates with homozygous alpha-thalassemia. As to expression, detected in fetal erythrocytes (at protein level).

The zeta chain is an alpha-type chain of mammalian embryonic hemoglobin. The protein is Hemoglobin subunit zeta (HBZ) of Homo sapiens (Human).